Here is a 217-residue protein sequence, read N- to C-terminus: Large ribosomal subunit protein uL1 (217 aa).

Belongs to the universal ribosomal protein uL1 family. Component of the large ribosomal subunit (LSU). Mature ribosomes consist of a small (40S) and a large (60S) subunit. The 40S subunit contains about 32 different proteins and 1 molecule of RNA (18S). The 60S subunit contains 45 different proteins and 3 molecules of RNA (25S, 5.8S and 5S). uL1 forms part of the L1 stalk.

It is found in the cytoplasm. Component of the ribosome, a large ribonucleoprotein complex responsible for the synthesis of proteins in the cell. The small ribosomal subunit (SSU) binds messenger RNAs (mRNAs) and translates the encoded message by selecting cognate aminoacyl-transfer RNA (tRNA) molecules. The large subunit (LSU) contains the ribosomal catalytic site termed the peptidyl transferase center (PTC), which catalyzes the formation of peptide bonds, thereby polymerizing the amino acids delivered by tRNAs into a polypeptide chain. The nascent polypeptides leave the ribosome through a tunnel in the LSU and interact with protein factors that function in enzymatic processing, targeting, and the membrane insertion of nascent chains at the exit of the ribosomal tunnel. uL1 forms part of the L1 stalk, a mobile element that plays a role in evacuating the exit-site tRNA. This Candida albicans (strain SC5314 / ATCC MYA-2876) (Yeast) protein is Large ribosomal subunit protein uL1 (RPL10A).